A 249-amino-acid polypeptide reads, in one-letter code: 3-deoxy-D-manno-octulosonic acid kinase (249 aa).

D175 is an active-site residue.

The protein belongs to the protein kinase superfamily. KdkA/RfaP family.

It is found in the cell inner membrane. The catalysed reaction is an alpha-Kdo-(2-&gt;6)-lipid IVA + ATP = a 4-O-phospho-alpha-Kdo-(2-&gt;6)-lipid IVA + ADP + H(+). The protein operates within bacterial outer membrane biogenesis; LPS core biosynthesis. Catalyzes the ATP-dependent phosphorylation of the 3-deoxy-D-manno-octulosonic acid (Kdo) residue in Kdo-lipid IV(A) at the 4-OH position. The polypeptide is 3-deoxy-D-manno-octulosonic acid kinase (Stenotrophomonas maltophilia (strain K279a)).